Consider the following 316-residue polypeptide: tRNA dimethylallyltransferase (316 aa).

19–26 (GPTASGKT) contacts ATP. 21 to 26 (TASGKT) contributes to the substrate binding site. Interaction with substrate tRNA regions lie at residues 44–47 (DSAL), 168–172 (QRITR), and 249–254 (RCVGYR).

Belongs to the IPP transferase family. Monomer. Mg(2+) serves as cofactor.

It carries out the reaction adenosine(37) in tRNA + dimethylallyl diphosphate = N(6)-dimethylallyladenosine(37) in tRNA + diphosphate. In terms of biological role, catalyzes the transfer of a dimethylallyl group onto the adenine at position 37 in tRNAs that read codons beginning with uridine, leading to the formation of N6-(dimethylallyl)adenosine (i(6)A). This chain is tRNA dimethylallyltransferase, found in Colwellia psychrerythraea (strain 34H / ATCC BAA-681) (Vibrio psychroerythus).